A 1058-amino-acid polypeptide reads, in one-letter code: Ubiquitin-like modifier-activating enzyme 1 Y (1058 aa).

The tract at residues 1-22 is disordered; that stretch reads MSSSVLSKKRKVSGPDSSLDSS. Residues alanine 477, aspartate 503, arginine 514, lysine 527, and 575–576 each bind ATP; that span reads DN. Residue cysteine 631 is the Glycyl thioester intermediate of the active site.

Belongs to the ubiquitin-activating E1 family. Monomer. In terms of tissue distribution, expressed in testis in A spermatogonia and spermatids but not (or at very low levels) in pachytene spermatocytes. Also expressed in Y-bearing ovaries and at very low levels in adrenal gland.

The enzyme catalyses ATP + ubiquitin + [E1 ubiquitin-activating enzyme]-L-cysteine = AMP + diphosphate + S-ubiquitinyl-[E1 ubiquitin-activating enzyme]-L-cysteine.. Its pathway is protein modification; protein ubiquitination. Activates ubiquitin by first adenylating its C-terminal glycine residue with ATP, and thereafter linking this residue to the side chain of a cysteine residue in E1, yielding a ubiquitin-E1 thioester and free AMP. The Y chromosome form could be involved in the survival and proliferation of differentiating spermatogonia. This chain is Ubiquitin-like modifier-activating enzyme 1 Y (Uba1y), found in Mus musculus (Mouse).